The chain runs to 1249 residues: DNA repair protein REV1 (1249 aa).

The 88-residue stretch at 44 to 131 (TASAIFSGVA…RLLSSAPYQL (88 aa)) folds into the BRCT domain. The segment at 253 to 323 (LSLDSTQEEK…STVQGPSSTK (71 aa)) is disordered. A compositionally biased stretch (basic and acidic residues) spans 259-275 (QEEKRAEKSNADFRDCT). Positions 294 to 319 (RTNSLSPSLHSNTKINGAHHSTVQGP) are enriched in polar residues. Positions 350 to 360 (FYSRSRLHHIS) are interaction with target DNA. Residues Arg355, 421 to 425 (DMDCF), 508 to 514 (SCSYEAR), Asn520, and Asp568 each bind dCTP. Residues 417 to 651 (VMHVDMDCFF…QLVTNLPGVG (235 aa)) form the UmuC domain. Asp421 lines the Mg(2+) pocket. Mg(2+)-binding residues include Asp568 and Glu569. Interaction with target DNA regions lie at residues 651 to 654 (GRSM) and 707 to 715 (RKSVSAEIN). The segment covering 1035–1047 (AYDQRQRQGEDTT) has biased composition (basic and acidic residues). The disordered stretch occupies residues 1035–1109 (AYDQRQRQGE…LPGAYGSPQK (75 aa)). Residues 1048 to 1057 (HQQPTSTSVP) show a composition bias toward polar residues. The Nuclear localization signal motif lies at 1072 to 1078 (KRNKRKN). The segment at 1150 to 1249 (FRPAAPNLAG…QTYGSTLKVT (100 aa)) is protein interaction domain; mediates interaction with DNA polymerase zeta.

This sequence belongs to the DNA polymerase type-Y family. Interacts with FAAP20. Monomer. Interacts with the DNA polymerase zeta which is composed of REV3L and MAD2L2; the interaction with MAD2L2 is direct and requires that REV3L is in its closed conformation. Interacts with POLH, POLI and POLK. Ubiquitous.

It is found in the nucleus. Deoxycytidyl transferase involved in DNA repair. Transfers a dCMP residue from dCTP to the 3'-end of a DNA primer in a template-dependent reaction. May assist in the first step in the bypass of abasic lesions by the insertion of a nucleotide opposite the lesion. Required for normal induction of mutations by physical and chemical agents. This chain is DNA repair protein REV1 (Rev1), found in Mus musculus (Mouse).